The sequence spans 780 residues: Pendrin (780 aa).

Residues 1–87 (MAARDRRSEP…YRVKEWLLSD (87 aa)) are Cytoplasmic-facing. Residues 88–108 (IISGVSTGLVGTLQGMAYALL) traverse the membrane as a helical segment. Alanine 109 is a topological domain (extracellular). A helical membrane pass occupies residues 110–130 (AVPVQYGLYSAFFPILTYFVF). The Cytoplasmic portion of the chain corresponds to 131-135 (GTSRH). Residues 136 to 156 (ISVGPFPVVSLMVGSVVLSMA) form a helical membrane-spanning segment. Topologically, residues 157 to 191 (PDDHFLVPSGNGSTLNTTTLDTGTRDAARVLLAST) are extracellular. A helical membrane pass occupies residues 192-212 (LTLLVGIIQLVFGGLQIGFIV). Residues 213-218 (RYLADP) are Cytoplasmic-facing. Residues 219 to 239 (LVGGFTTAAAFQVLVSQLKIV) form a helical membrane-spanning segment. Residues 240 to 263 (LNVSTKNYNGVLSIIYTLIEIFQN) are Extracellular-facing. The chain crosses the membrane as a helical span at residues 264 to 284 (IGDTNIADFIAGLLTIIVCMA). The Cytoplasmic portion of the chain corresponds to 285–295 (VKELNDRFKHK). The chain crosses the membrane as a helical span at residues 296-316 (IPVPIPIEVIVTIIATAISYG). Topologically, residues 317-344 (ANLEANYNAGIVKSIPSGFLPPVLPSVG) are extracellular. Residues 345 to 365 (LFSDMLAASFSIAVVAYAIAV) form a helical membrane-spanning segment. The Cytoplasmic segment spans residues 366–384 (SVGKVYATKHDYIIDGNQE). Residues 385–405 (FIAFGISNVFSGFFSCFVATT) traverse the membrane as a helical segment. Over 406–421 (ALSRTAVQESTGGKTQ) the chain is Extracellular. The chain crosses the membrane as a helical span at residues 422–442 (VAGLISAVIVMVAIVALGKLL). The Cytoplasmic portion of the chain corresponds to 443-448 (EPLQKS). The chain crosses the membrane as a helical span at residues 449 to 469 (VLAAVVIANLKGMFMQVCDVP). The Extracellular segment spans residues 470–486 (RLWKQNKTDAVIWVFTC). Residues 487–507 (IMSIILGLDLGLLAGLLFGLL) form a helical membrane-spanning segment. Residues 508–780 (TVVLRVQFPS…QDEAMRRLAS (273 aa)) are Cytoplasmic-facing. The STAS domain maps to 535 to 729 (HYKNLEEPEG…LTVHDAILYL (195 aa)).

This sequence belongs to the SLC26A/SulP transporter (TC 2.A.53) family. In terms of tissue distribution, highly expressed in the kidney (at protein level).

Its subcellular location is the cell membrane. The protein localises to the apical cell membrane. The enzyme catalyses chloride(in) = chloride(out). It catalyses the reaction iodide(out) = iodide(in). It carries out the reaction hydrogencarbonate(in) + chloride(out) = hydrogencarbonate(out) + chloride(in). The catalysed reaction is iodide(in) + hydrogencarbonate(out) = iodide(out) + hydrogencarbonate(in). The enzyme catalyses iodide(in) + chloride(out) = iodide(out) + chloride(in). It catalyses the reaction formate(in) + chloride(out) = formate(out) + chloride(in). Functionally, sodium-independent transporter of chloride and iodide. Mediates electroneutral chloride-bicarbonate and chloride-formate exchange with 1:1 stoichiometry. Mediates electroneutral iodide-chloride and iodide-bicarbonate exchange. This chain is Pendrin (Slc26a4), found in Rattus norvegicus (Rat).